The primary structure comprises 349 residues: Glycerol-3-phosphate dehydrogenase [NAD(P)+] (349 aa).

The NADPH site is built by serine 31, phenylalanine 32, arginine 52, lysine 53, and lysine 126. Sn-glycerol 3-phosphate is bound by residues lysine 126, glycine 154, and serine 156. Residue alanine 158 participates in NADPH binding. Residues lysine 209, aspartate 262, serine 272, arginine 273, and asparagine 274 each coordinate sn-glycerol 3-phosphate. Catalysis depends on lysine 209, which acts as the Proton acceptor. An NADPH-binding site is contributed by arginine 273. The NADPH site is built by valine 297 and glutamate 299.

The protein belongs to the NAD-dependent glycerol-3-phosphate dehydrogenase family.

The protein resides in the cytoplasm. It catalyses the reaction sn-glycerol 3-phosphate + NAD(+) = dihydroxyacetone phosphate + NADH + H(+). It carries out the reaction sn-glycerol 3-phosphate + NADP(+) = dihydroxyacetone phosphate + NADPH + H(+). It functions in the pathway membrane lipid metabolism; glycerophospholipid metabolism. In terms of biological role, catalyzes the reduction of the glycolytic intermediate dihydroxyacetone phosphate (DHAP) to sn-glycerol 3-phosphate (G3P), the key precursor for phospholipid synthesis. This is Glycerol-3-phosphate dehydrogenase [NAD(P)+] from Clostridium tetani (strain Massachusetts / E88).